Here is a 1546-residue protein sequence, read N- to C-terminus: DNA-directed RNA polymerase subunit beta' (1546 aa).

Zn(2+)-binding residues include C57, C59, C72, and C75. 3 residues coordinate Mg(2+): D756, D758, and D760. Zn(2+) contacts are provided by C1130, C1211, C1218, and C1221. The segment at 1512–1546 (LEKYGEGSTSSDAVTGGQRYDDTRPGSSINPGYGD) is disordered. Over residues 1536 to 1546 (PGSSINPGYGD) the composition is skewed to polar residues.

The protein belongs to the RNA polymerase beta' chain family. The RNAP catalytic core consists of 2 alpha, 1 beta, 1 beta' and 1 omega subunit. When a sigma factor is associated with the core the holoenzyme is formed, which can initiate transcription. Requires Mg(2+) as cofactor. The cofactor is Zn(2+).

The catalysed reaction is RNA(n) + a ribonucleoside 5'-triphosphate = RNA(n+1) + diphosphate. Its function is as follows. DNA-dependent RNA polymerase catalyzes the transcription of DNA into RNA using the four ribonucleoside triphosphates as substrates. The sequence is that of DNA-directed RNA polymerase subunit beta' from Deinococcus radiodurans (strain ATCC 13939 / DSM 20539 / JCM 16871 / CCUG 27074 / LMG 4051 / NBRC 15346 / NCIMB 9279 / VKM B-1422 / R1).